Here is a 429-residue protein sequence, read N- to C-terminus: 5-methylthioadenosine/S-adenosylhomocysteine deaminase (429 aa).

The Zn(2+) site is built by His-65 and His-67. Positions 94 and 182 each coordinate substrate. His-209 contacts Zn(2+). Positions 212 and 297 each coordinate substrate. Asp-297 serves as a coordination point for Zn(2+).

Belongs to the metallo-dependent hydrolases superfamily. MTA/SAH deaminase family. Zn(2+) serves as cofactor.

The enzyme catalyses S-adenosyl-L-homocysteine + H2O + H(+) = S-inosyl-L-homocysteine + NH4(+). It carries out the reaction S-methyl-5'-thioadenosine + H2O + H(+) = S-methyl-5'-thioinosine + NH4(+). In terms of biological role, catalyzes the deamination of 5-methylthioadenosine and S-adenosyl-L-homocysteine into 5-methylthioinosine and S-inosyl-L-homocysteine, respectively. Is also able to deaminate adenosine. This chain is 5-methylthioadenosine/S-adenosylhomocysteine deaminase, found in Clostridium tetani (strain Massachusetts / E88).